We begin with the raw amino-acid sequence, 287 residues long: Spermidine/putrescine transport system permease protein PotB (287 aa).

The Cytoplasmic portion of the chain corresponds to 1 to 10; the sequence is MKNTSKFQNV. A helical membrane pass occupies residues 11-31; that stretch reads VIVTIVGWLVLFVFLPNLMII. The Periplasmic portion of the chain corresponds to 32 to 70; it reads GTSFLTRDDASFVKMVFTLDNYARLLDPLYFEVLLHSLN. The 207-residue stretch at 65-271 folds into the ABC transmembrane type-1 domain; the sequence is LLHSLNMALI…IVMGLMLLIY (207 aa). A helical transmembrane segment spans residues 71–91; that stretch reads MALIATLSCLVLGYPFAWFLA. The Cytoplasmic segment spans residues 92–99; it reads KLPEKIRP. Residues 100–120 form a helical membrane-spanning segment; it reads LLLFLLIVPFWTNSLIRIYGL. The Periplasmic segment spans residues 121–145; sequence KIFLSTKGYLNEFLLWLGVIDTPIR. A helical transmembrane segment spans residues 146 to 166; it reads IMFTPSAVIIGLVYILLPFMV. The Cytoplasmic segment spans residues 167-197; sequence MPLYSSIEKLDKPLLEAARDLGASKMQTFIR. Residues 198 to 218 traverse the membrane as a helical segment; the sequence is IIIPLTMPGIVAGCLLVMLPA. The Periplasmic segment spans residues 219-251; that stretch reads MGLFYVSDLMGGAKNLLIGNVIKVQFLNIRDWP. The helical transmembrane segment at 252 to 272 threads the bilayer; the sequence is FGAATSITLTIVMGLMLLIYW. Over 273 to 287 the chain is Cytoplasmic; it reads RASRLLNKKVSDISD.

Belongs to the binding-protein-dependent transport system permease family. CysTW subfamily.

Its subcellular location is the cell inner membrane. Required for the activity of the bacterial periplasmic transport system of putrescine and spermidine. The chain is Spermidine/putrescine transport system permease protein PotB (potB) from Salmonella typhi.